The primary structure comprises 451 residues: AAA-ATPase At3g28570, mitochondrial (451 aa).

The transit peptide at 1-48 directs the protein to the mitochondrion; the sequence is MFAENLTRIGSNVAGLFFVWSTLKRYFPRQIQQLLFNAIQRIPIFKRL. 243-250 provides a ligand contact to ATP; that stretch reads GPPGTGKS.

The protein belongs to the AAA ATPase family. BCS1 subfamily. The cofactor is Mg(2+).

Its subcellular location is the mitochondrion. It catalyses the reaction ATP + H2O = ADP + phosphate + H(+). This is AAA-ATPase At3g28570, mitochondrial from Arabidopsis thaliana (Mouse-ear cress).